A 600-amino-acid chain; its full sequence is Glutamine--fructose-6-phosphate aminotransferase [isomerizing] (600 aa).

Cys2 functions as the Nucleophile; for GATase activity in the catalytic mechanism. Residues 2-217 enclose the Glutamine amidotransferase type-2 domain; sequence CGIVGYIGQL…DKEMVIVTDD (216 aa). 2 consecutive SIS domains span residues 283–422 and 452–590; these read IAAA…KNGI and IARE…VDKP. Catalysis depends on Lys595, which acts as the For Fru-6P isomerization activity.

In terms of assembly, homodimer.

It localises to the cytoplasm. It catalyses the reaction D-fructose 6-phosphate + L-glutamine = D-glucosamine 6-phosphate + L-glutamate. Catalyzes the first step in hexosamine metabolism, converting fructose-6P into glucosamine-6P using glutamine as a nitrogen source. The sequence is that of Glutamine--fructose-6-phosphate aminotransferase [isomerizing] from Bacillus subtilis (strain 168).